The chain runs to 152 residues: Aspartate carbamoyltransferase regulatory chain (152 aa).

Zn(2+) is bound by residues Cys-108, Cys-113, Cys-136, and Cys-139.

Belongs to the PyrI family. Contains catalytic and regulatory chains. The cofactor is Zn(2+).

Functionally, involved in allosteric regulation of aspartate carbamoyltransferase. This is Aspartate carbamoyltransferase regulatory chain from Thermococcus kodakarensis (strain ATCC BAA-918 / JCM 12380 / KOD1) (Pyrococcus kodakaraensis (strain KOD1)).